Reading from the N-terminus, the 187-residue chain is Calcium and integrin-binding family member 3 (187 aa).

3 EF-hand domains span residues 66–101 (KDNPFRQRIAQVFSEDGDGHMTLDNFLDMFSVMSEM), 103–138 (PRDLKAYYAFKIYDFNNDDYICAWDLEQTVTKLTRG), and 144–179 (EVSLVCEKVLDEADGDHDGRLSLEDFQNMILRAPDF). Ca(2+) contacts are provided by D116, N118, D120, Y122, D127, D157, D159, D161, R163, and D168.

In terms of assembly, monomer and homodimer. Interacts with ITGA2B (via C-terminus cytoplasmic tail region); the interaction is stabilized/increased in a calcium and magnesium-dependent manner. Interacts with TMC1.

Functionally, acts a an auxiliary subunit of the sensory mechanoelectrical transduction (MET) channel in hair cells. Plays a role in regulating hair cell MET channel localization and function. The protein is Calcium and integrin-binding family member 3 (CIB3) of Homo sapiens (Human).